We begin with the raw amino-acid sequence, 323 residues long: L-lactate dehydrogenase 1 (323 aa).

NAD(+) contacts are provided by residues Val-18, Asp-39, Tyr-69, and Gly-83–Ala-84. Residues Gln-86 and Arg-92 each contribute to the substrate site. NAD(+) is bound by residues Ser-105, Val-122–Asn-124, and Ser-147. Asn-124–Asp-127 lines the substrate pocket. Asp-152–Arg-155 lines the substrate pocket. His-179 acts as the Proton acceptor in catalysis. Residue Tyr-223 is modified to Phosphotyrosine. Thr-232 contributes to the substrate binding site.

It belongs to the LDH/MDH superfamily. LDH family. In terms of assembly, homotetramer.

Its subcellular location is the cytoplasm. The catalysed reaction is (S)-lactate + NAD(+) = pyruvate + NADH + H(+). The protein operates within fermentation; pyruvate fermentation to lactate; (S)-lactate from pyruvate: step 1/1. Catalyzes the conversion of lactate to pyruvate. The polypeptide is L-lactate dehydrogenase 1 (Lactobacillus acidophilus (strain ATCC 700396 / NCK56 / N2 / NCFM)).